The sequence spans 550 residues: MSAKEVKFGVDARDRMLRGVDILHNAVKVTLGPKGRNVVLDKSFGAPRITKDGVTVAKEIELEDKFENMGAQMVREVASKSADAAGDGTTTATVLAAAIVREGAKSVAAGMNPMDLKRGIDMAVEAVVADLVKNSKKVTSNEEIAQVGTISANGDAEIGKFISDAMKKVGNEGVITVEEAKSLETELEVVEGMQFDRGYISPYFVTNADKMRVEMDDAYVLINEKKLSQLNELLPLLEAVVQSGKPLVIIAEDVEGEALATLVVNRLRGGLKVAAVKAPGFGDRRKAMLQDIAILTGGQAISEDLGIKLENVTLNMLGRAKKVMIDKENTTIVSGAGKKADIEARVAQIKAQIEETTSDYDREKLQERLAKLAGGVAVIRVGGATEVEVKERKDRVDDAMHATRAAVEEGILPGGGVALLRASEHLKGIRTKNDDQKTGVEIVRKALSYPARQIAINAGEDGSVIVGKILEKDQYSYGYDSQTGEYGNLVSKGIIDPTKVVRVAIQNAASVAALLITTEAMVAEVPKKNTGAGGMPPGGGGMGGMGGMDF.

Residues 30–33, Lys51, 87–91, Gly415, and Asp496 contribute to the ATP site; these read TLGP and DGTTT.

The protein belongs to the chaperonin (HSP60) family. In terms of assembly, forms a cylinder of 14 subunits composed of two heptameric rings stacked back-to-back. Interacts with the co-chaperonin GroES.

It is found in the cytoplasm. It carries out the reaction ATP + H2O + a folded polypeptide = ADP + phosphate + an unfolded polypeptide.. Its function is as follows. Together with its co-chaperonin GroES, plays an essential role in assisting protein folding. The GroEL-GroES system forms a nano-cage that allows encapsulation of the non-native substrate proteins and provides a physical environment optimized to promote and accelerate protein folding. The protein is Chaperonin GroEL 2 of Bradyrhizobium diazoefficiens (strain JCM 10833 / BCRC 13528 / IAM 13628 / NBRC 14792 / USDA 110).